Here is an 83-residue protein sequence, read N- to C-terminus: Gas vesicle protein G1 (83 aa).

The protein belongs to the gas vesicle GvpG family. In terms of assembly, gvpF to GvpM interact with each other in vitro, and may form multi-subunit complex(es). Might interact with GvpA1.

It localises to the gas vesicle. In terms of biological role, proteins GvpF to GvpM might be involved in nucleating gas vesicle formation. A minor component of the gas vesicle. Gas vesicles are hollow, gas filled proteinaceous nanostructures found in several microbial planktonic microorganisms. They allow positioning of halobacteria at the optimal depth for growth in the poorly aerated, shallow brine pools of their habitat. Its function is as follows. Expression of a 9.5 kb p-vac DNA fragment containing 2 divergently transcribed regions (gvpD-gvpE-gvpF-gvpG-gvpH-gvpI-gvpJ-gvpK-gvpL-gvpM and gvpA-gvpC-gvpN-gvpO) allows H.volcanii to produce gas vesicles. A minimal gas vesicle can be made in H.volcanii by gvpA1-gvpO1 plus gvpF1-gvpG1-gvpJ1-gvpK1-gvpL1-gvpM1; lack of enough GvpJ1 prevents formation. A similar region restores gas vesicle production in H.halobium without the p-vac locus, but it still has the c-vac locus. In Halobacterium salinarum (strain ATCC 700922 / JCM 11081 / NRC-1) (Halobacterium halobium), this protein is Gas vesicle protein G1 (gvpG11).